We begin with the raw amino-acid sequence, 271 residues long: Probable redox regulatory protein SCO3349 (271 aa).

Disordered stretches follow at residues 1-21 (MPKT…KHIA) and 109-130 (AEGT…TRPF). Over residues 7–21 (AKDEKSAKKDKKHIA) the composition is skewed to basic and acidic residues.

The protein belongs to the Rv0495c family.

In terms of biological role, essential for maintaining intracellular redox homeostasis. The polypeptide is Probable redox regulatory protein SCO3349 (Streptomyces coelicolor (strain ATCC BAA-471 / A3(2) / M145)).